Consider the following 421-residue polypeptide: Na(+)/H(+) antiporter NhaA 1 (421 aa).

A run of 11 helical transmembrane segments spans residues 48–68 (SSGLVLILAAVLAFAWANSPW), 93–113 (LYWWVNDLLMALFFLLVGLEI), 129–149 (SLALFAALGGMLLPAGLYTLV), 157–177 (AGWGVPMATDIAFALGVLALL), 187–207 (VLLAALAILDDLGAVLVIALF), 215–235 (LALGLMGAVWALGLGLNAAGV), 253–273 (LASGLHPTVAGVLLALTIPLG), 299–319 (FLILPLFALFNAGVSVAGGSL), 326–346 (VVLGLIIGKPLGVVAFAWLAV), 364–384 (GLGLLAGIGFTMALFIGGLAF), and 392–412 (AAKLGILTASVLAALAAITVL).

This sequence belongs to the NhaA Na(+)/H(+) (TC 2.A.33) antiporter family.

It localises to the cell membrane. It catalyses the reaction Na(+)(in) + 2 H(+)(out) = Na(+)(out) + 2 H(+)(in). In terms of biological role, na(+)/H(+) antiporter that extrudes sodium in exchange for external protons. The sequence is that of Na(+)/H(+) antiporter NhaA 1 from Deinococcus geothermalis (strain DSM 11300 / CIP 105573 / AG-3a).